Consider the following 166-residue polypeptide: Ribosome maturation factor RimM (166 aa).

The PRC barrel domain occupies 94 to 166 (GDEYYWRDLM…EMVVRLLPGL (73 aa)).

Belongs to the RimM family. As to quaternary structure, binds ribosomal protein uS19.

It localises to the cytoplasm. Functionally, an accessory protein needed during the final step in the assembly of 30S ribosomal subunit, possibly for assembly of the head region. Essential for efficient processing of 16S rRNA. May be needed both before and after RbfA during the maturation of 16S rRNA. It has affinity for free ribosomal 30S subunits but not for 70S ribosomes. The sequence is that of Ribosome maturation factor RimM from Syntrophus aciditrophicus (strain SB).